The sequence spans 122 residues: Large ribosomal subunit protein uL14 (122 aa).

This sequence belongs to the universal ribosomal protein uL14 family. In terms of assembly, part of the 50S ribosomal subunit. Forms a cluster with proteins L3 and L19. In the 70S ribosome, L14 and L19 interact and together make contacts with the 16S rRNA in bridges B5 and B8.

Functionally, binds to 23S rRNA. Forms part of two intersubunit bridges in the 70S ribosome. The chain is Large ribosomal subunit protein uL14 from Buchnera aphidicola subsp. Acyrthosiphon pisum (strain 5A).